A 602-amino-acid chain; its full sequence is NAD-reducing hydrogenase HoxS subunit alpha (602 aa).

219–228 (GRGGAGFSTG) lines the NAD(+) pocket. FMN is bound at residue 332-379 (GAGAYICGDESALIESCEGKRGTPRVKPPFPVQQGYLGKPTSVNNVET). Residues Cys-499, Cys-502, Cys-505, and Cys-545 each contribute to the [4Fe-4S] cluster site.

It belongs to the complex I 51 kDa subunit family. Tetramer of an alpha and a gamma subunits (flavin-containing dimer), and a delta and a nickel-containing beta subunit (hydrogenase dimer). The cofactor is FMN. Requires [4Fe-4S] cluster as cofactor.

The protein localises to the cytoplasm. It carries out the reaction H2 + NAD(+) = NADH + H(+). Subunits alpha and gamma of HoxS constitute an NADH--oxidoreductase. This is NAD-reducing hydrogenase HoxS subunit alpha (hoxF) from Cupriavidus necator (strain ATCC 17699 / DSM 428 / KCTC 22496 / NCIMB 10442 / H16 / Stanier 337) (Ralstonia eutropha).